The chain runs to 971 residues: Exportin-2 (971 aa).

Positions 29-102 (AEKFLESVEG…KANIVNLMLS (74 aa)) constitute an Importin N-terminal domain.

It belongs to the XPO2/CSE1 family. Interacts with cftr.

It localises to the cytoplasm. The protein localises to the nucleus. Functionally, export receptor for importin alpha. Mediates importin-alpha re-export from the nucleus to the cytoplasm after import substrates have been released into the nucleoplasm. Negatively regulates fluid secretion and plays a role in fluid homeostasis by down-regulating cftr activity. This is Exportin-2 (cse1l) from Oreochromis niloticus (Nile tilapia).